A 65-amino-acid polypeptide reads, in one-letter code: Beta-mammal toxin Tma1 (65 aa).

One can recognise an LCN-type CS-alpha/beta domain in the interval 2 to 64 (KEGYLVGNDG…TWNSAKNRCG (63 aa)). Intrachain disulfides connect cysteine 12–cysteine 63, cysteine 16–cysteine 38, cysteine 24–cysteine 44, and cysteine 28–cysteine 46.

This sequence belongs to the long (4 C-C) scorpion toxin superfamily. Sodium channel inhibitor family. Expressed by the venom gland.

The protein localises to the secreted. Functionally, beta toxins bind voltage-independently at site-4 of sodium channels (Nav) and shift the voltage of activation toward more negative potentials thereby affecting sodium channel activation and promoting spontaneous and repetitive firing. This toxin acts on human Nav1.4/SCN4A and Nav1.6/SCN8A voltage-gated sodium channels. In Tityus macrochirus (Scorpion), this protein is Beta-mammal toxin Tma1.